The sequence spans 389 residues: Trans-2-enoyl-CoA reductase [NADH] (389 aa).

NAD(+)-binding positions include 47-52 (GASTGY), 73-74 (FE), 110-111 (DA), and 138-139 (LA). A substrate-binding site is contributed by Tyr-224. Tyr-234 acts as the Proton donor in catalysis. Residues Lys-243 and 272-274 (LVT) each bind NAD(+).

It belongs to the TER reductase family. As to quaternary structure, monomer.

The enzyme catalyses a 2,3-saturated acyl-CoA + NAD(+) = a (2E)-enoyl-CoA + NADH + H(+). It functions in the pathway lipid metabolism; fatty acid biosynthesis. In terms of biological role, involved in the fatty acid synthesis (FAS II). Catalyzes the reduction of a carbon-carbon double bond in an enoyl moiety that is covalently linked to a coenzyme A (CoA). In Clostridium perfringens (strain 13 / Type A), this protein is Trans-2-enoyl-CoA reductase [NADH].